The sequence spans 340 residues: Putative esterase YheT (340 aa).

Residues 73–312 (PRLVVFHGLE…TEHGGHVGFI (240 aa)) enclose the AB hydrolase-1 domain. Catalysis depends on charge relay system residues S153, D280, and H308.

The protein belongs to the AB hydrolase superfamily. AB hydrolase 4 family.

The sequence is that of Putative esterase YheT (yheT) from Escherichia coli (strain K12).